Here is a 120-residue protein sequence, read N- to C-terminus: Small ribosomal subunit protein bS6 (120 aa).

This sequence belongs to the bacterial ribosomal protein bS6 family.

Functionally, binds together with bS18 to 16S ribosomal RNA. The polypeptide is Small ribosomal subunit protein bS6 (Blochmanniella floridana).